The chain runs to 333 residues: Secreted mono- and diacylglycerol lipase 1 (333 aa).

Positions 1-16 (MMLILSILSIIAFAAA) are cleaved as a signal peptide. 2 cysteine pairs are disulfide-bonded: Cys-56–Cys-268 and Cys-276–Cys-298. Ser-176 acts as the Nucleophile in catalysis. Residues Asp-230 and His-288 contribute to the active site.

Belongs to the AB hydrolase superfamily. Lipase family. Class 3 subfamily.

The protein localises to the secreted. It catalyses the reaction a monoacylglycerol + H2O = glycerol + a fatty acid + H(+). It carries out the reaction a diacylglycerol + H2O = a monoacylglycerol + a fatty acid + H(+). Functionally, secreted mono- and diacylglycerol lipase that allows the use of hydrolyzed lipids as carbon source and might play a role in pathogenicity. Shows lipolytic activity towards olive oil and p-nitrophenylpalmitate. The polypeptide is Secreted mono- and diacylglycerol lipase 1 (Fusarium solani (Filamentous fungus)).